Consider the following 154-residue polypeptide: MAARLCCQLDPARDVLCLRPVGAESRGRPLPGPLGAIPPASPPVVPTDHGAHLSLRGLPVCAFSSAGPCALRFTSARRMETTVNAPGNLPKVLHKRTLGLSVMSTTDLEAYFKDCVFTEWEELGEEVRLKVFVLGGCRHKLVCPPAPCNFFTSA.

Residues 68–117 (PCALRFTSARRMETTVNAPGNLPKVLHKRTLGLSVMSTTDLEAYFKDCVF) form a mitochondrial targeting sequence region.

The protein belongs to the orthohepadnavirus protein X family. As to quaternary structure, may form homodimer. May interact with host CEBPA, CFLAR, CREB1, DDB1, E4F1, HBXIP, HSPD1/HSP60, NFKBIA, POLR2E and SMAD4. Interacts with host SMC5-SMC6 complex and induces its degradation. Interacts with host TRPC4AP; leading to prevent ubiquitination of TRPC4AP. Interacts with host PLSCR1; this interaction promotes ubiquitination and degradation of HBx and impairs HBx-mediated cell proliferation. Post-translationally, a fraction may be phosphorylated in insect cells and HepG2 cells, a human hepatoblastoma cell line. Phosphorylated in vitro by host protein kinase C or mitogen-activated protein kinase. N-acetylated in insect cells.

It localises to the host cytoplasm. Its subcellular location is the host nucleus. It is found in the host mitochondrion. Multifunctional protein that plays a role in silencing host antiviral defenses and promoting viral transcription. Does not seem to be essential for HBV infection. May be directly involved in development of cirrhosis and liver cancer (hepatocellular carcinoma). Most of cytosolic activities involve modulation of cytosolic calcium. The effect on apoptosis is controversial depending on the cell types in which the studies have been conducted. May induce apoptosis by localizing in mitochondria and causing loss of mitochondrial membrane potential. May also modulate apoptosis by binding host CFLAR, a key regulator of the death-inducing signaling complex (DISC). Promotes viral transcription by using the host E3 ubiquitin ligase DDB1 to target the SMC5-SMC6 complex to proteasomal degradation. This host complex would otherwise bind to viral episomal DNA, and prevents its transcription. Moderately stimulates transcription of many different viral and cellular transcription elements. Promoters and enhancers stimulated by HBx contain DNA binding sites for NF-kappa-B, AP-1, AP-2, c-EBP, ATF/CREB, or the calcium-activated factor NF-AT. The sequence is that of Protein X from Hepatitis B virus genotype B2 (isolate Vietnam/16091/1992) (HBV-B).